Here is a 631-residue protein sequence, read N- to C-terminus: Glutamyl-tRNA(Gln) amidotransferase subunit E (631 aa).

It belongs to the GatB/GatE family. GatE subfamily. In terms of assembly, heterodimer of GatD and GatE.

It carries out the reaction L-glutamyl-tRNA(Gln) + L-glutamine + ATP + H2O = L-glutaminyl-tRNA(Gln) + L-glutamate + ADP + phosphate + H(+). Allows the formation of correctly charged Gln-tRNA(Gln) through the transamidation of misacylated Glu-tRNA(Gln) in organisms which lack glutaminyl-tRNA synthetase. The reaction takes place in the presence of glutamine and ATP through an activated gamma-phospho-Glu-tRNA(Gln). The GatDE system is specific for glutamate and does not act on aspartate. This Methanococcus maripaludis (strain DSM 14266 / JCM 13030 / NBRC 101832 / S2 / LL) protein is Glutamyl-tRNA(Gln) amidotransferase subunit E.